The sequence spans 572 residues: Nuclear hormone receptor family member nhr-25 (572 aa).

The nuclear receptor DNA-binding region spans 15 to 90; the sequence is GEMCPVCGDR…MGMKMEAVRA (76 aa). 2 consecutive NR C4-type zinc fingers follow at residues 18–38 and 54–78; these read CPVCGDRVSGYHYGLLTCESC and CSAEANCHVDRTCRKRCPSCRFQKC. The NR LBD domain occupies 307-567; it reads PTEKTVDHFY…PTPQATYTAV (261 aa).

This sequence belongs to the nuclear hormone receptor family. As to quaternary structure, interacts with lin-39. Interacts with nob-1. As to expression, expressed in the epidermis, the developing somatic gonad, and a subset of other epithelial cells.

It localises to the nucleus. Orphan nuclear receptor and probable transcription activator, required during development. Plays a role in male tail tip morphogenesis regulating the expression of the transcription factor dmd-3 in a negative feedback loop. Regulates vulval precursor cell (VPC) differentiation, in concert with homeobox protein lin-39. Involved in promoting embryogenesis, in concert with homeobox protein nob-1. May play a role in modulation of lifespan and immunity. The protein is Nuclear hormone receptor family member nhr-25 of Caenorhabditis elegans.